The following is a 27-amino-acid chain: Augerpeptide hhe6.2 (27 aa).

Disulfide bonds link cysteine 4-cysteine 13, cysteine 8-cysteine 20, and cysteine 12-cysteine 27.

As to expression, expressed by the venom duct.

The protein resides in the secreted. The sequence is that of Augerpeptide hhe6.2 from Hastula hectica (Sea snail).